Here is a 293-residue protein sequence, read N- to C-terminus: uncharacterized protein (293 aa).

2 disordered regions span residues 20-148 (ELHS…NNNT) and 226-283 (RENQ…GNKN). Acidic residues-rich tracts occupy residues 37–47 (LEDDEEYDDDQ), 56–91 (EEFDYDNDYNDEEFYDEDDDFKEDDDEEEEEEDDEM), and 99–112 (NIDDDDYEEDEEEQ). Low complexity-rich tracts occupy residues 117-148 (TNNNNNTTTTTPYTTYNNNNNNDINNNNNNNT) and 232-283 (NSNS…GNKN).

This is an uncharacterized protein from Dictyostelium discoideum (Social amoeba).